A 261-amino-acid chain; its full sequence is 4-phosphopantoate--beta-alanine ligase (261 aa).

Residues R17, R39, 181–183, 187–188, and 199–200 each bind ATP; these read DLN, RS, and NI.

Belongs to the archaeal phosphopantothenate synthetase family. In terms of assembly, homodimer.

It catalyses the reaction (R)-4-phosphopantoate + beta-alanine + ATP = (R)-4'-phosphopantothenate + AMP + diphosphate + H(+). It functions in the pathway cofactor biosynthesis; coenzyme A biosynthesis. With respect to regulation, activity is not affected by 4'-phosphopantothenate or CoA/acetyl-CoA. Catalyzes the condensation of (R)-4-phosphopantoate and beta-alanine to 4'-phosphopantothenate in the CoA biosynthesis pathway. Cannot use (R)-pantoate as substrate and thus does not display pantothenate synthetase (PS) activity. Displays strict specificity for its natural substrates, 4-phosphopantoate, ATP and beta-alanine. The chain is 4-phosphopantoate--beta-alanine ligase from Thermococcus kodakarensis (strain ATCC BAA-918 / JCM 12380 / KOD1) (Pyrococcus kodakaraensis (strain KOD1)).